The primary structure comprises 173 residues: Alpha-crystallin A chain (173 aa).

N-acetylmethionine is present on methionine 1. Positions 53–164 (NFLDSSNSGM…GDRSIPVTRD (112 aa)) constitute a sHSP domain. Positions 101, 103, and 108 each coordinate Zn(2+). An intrachain disulfide couples cysteine 132 to cysteine 143. Positions 143 to 173 (CGPKSGGSESGRGDRSIPVTRDDKTNSTPSS) are disordered. Residues 153–167 (GRGDRSIPVTRDDKT) show a composition bias toward basic and acidic residues.

The protein belongs to the small heat shock protein (HSP20) family. As to quaternary structure, heteropolymer composed of three CRYAA and one CRYAB subunits. Inter-subunit bridging via zinc ions enhances stability, which is crucial as there is no protein turn over in the lens. Zinc coordination is achieved at least by His-101, Glu-103 and His-108. His-101 and Glu-103 come from the same molecule within the oligomer, while His-108 residue is provided by another molecule. Can also form homodimers and homotetramers (dimers of dimers) which serve as the building blocks of homooligomers. Part of a complex required for lens intermediate filament formation composed of BFSP1, BFSP2 and CRYAA.

Its subcellular location is the cytoplasm. It is found in the nucleus. Contributes to the transparency and refractive index of the lens. May act as a chaperone, preventing aggregation of various proteins under a wide range of stress conditions. The chain is Alpha-crystallin A chain (cryaa) from Psalidodon fasciatus (Banded astyanax).